Reading from the N-terminus, the 309-residue chain is Glycine-rich RNA-binding protein 3, mitochondrial (309 aa).

The transit peptide at methionine 1–methionine 37 directs the protein to the mitochondrion. Positions serine 40–aspartate 118 constitute an RRM domain. The interval phenylalanine 247–alanine 309 is disordered. Positions valine 258 to alanine 273 are enriched in polar residues.

The protein belongs to the GR-RBP family. In terms of assembly, homodimer. Interacts with ORRM2 and MORF8/RIP1. Interacts with RBG5/ORRM4. Binds to RBG2/ORRM5.

It localises to the mitochondrion. Possibly has a role in RNA transcription or processing during stress. Involved in C-to-U editing of mitochondrial RNA. Functions as a minor mitochondrial editing factor. Controls 6 percent of the mitochondrial editing sites. The sequence is that of Glycine-rich RNA-binding protein 3, mitochondrial from Arabidopsis thaliana (Mouse-ear cress).